We begin with the raw amino-acid sequence, 598 residues long: Probable translation initiation factor IF-2 (598 aa).

Residues 3-223 enclose the tr-type G domain; it reads LRCPIVSVLG…ISGLAQRFME (221 aa). The G1 stretch occupies residues 12–19; sequence GHVDHGKT. 12–19 is a GTP binding site; the sequence is GHVDHGKT. A G2 region spans residues 37–41; the sequence is GITQH. Residues 76-79 form a G3 region; that stretch reads DTPG. GTP-binding positions include 76–80 and 130–133; these read DTPGH and NKID. A G4 region spans residues 130 to 133; it reads NKID. The G5 stretch occupies residues 200-202; it reads SAM.

Belongs to the TRAFAC class translation factor GTPase superfamily. Classic translation factor GTPase family. IF-2 subfamily.

Functionally, function in general translation initiation by promoting the binding of the formylmethionine-tRNA to ribosomes. Seems to function along with eIF-2. The sequence is that of Probable translation initiation factor IF-2 from Methanococcus aeolicus (strain ATCC BAA-1280 / DSM 17508 / OCM 812 / Nankai-3).